The following is a 398-amino-acid chain: Tyrosine--tRNA ligase (398 aa).

The 'HIGH' region motif lies at 42–51 (PTAPDIHLGH). Positions 226 to 230 (KMSKS) match the 'KMSKS' region motif. Residue Lys229 coordinates ATP. Positions 336–397 (LAIANLLKDA…GKRKFAKVTL (62 aa)) constitute an S4 RNA-binding domain.

The protein belongs to the class-I aminoacyl-tRNA synthetase family. TyrS type 2 subfamily. As to quaternary structure, homodimer.

The protein resides in the cytoplasm. The catalysed reaction is tRNA(Tyr) + L-tyrosine + ATP = L-tyrosyl-tRNA(Tyr) + AMP + diphosphate + H(+). Catalyzes the attachment of tyrosine to tRNA(Tyr) in a two-step reaction: tyrosine is first activated by ATP to form Tyr-AMP and then transferred to the acceptor end of tRNA(Tyr). The polypeptide is Tyrosine--tRNA ligase (Shewanella oneidensis (strain ATCC 700550 / JCM 31522 / CIP 106686 / LMG 19005 / NCIMB 14063 / MR-1)).